Consider the following 277-residue polypeptide: Caspase-6 (277 aa).

A propeptide spanning residues 1-5 is cleaved from the precursor; the sequence is MTETD. Residues 25–27 are tri-arginine exosite; that stretch reads KRR. Ser62 is modified (phosphoserine). His104 is an active-site residue. Positions 108–125 are 130's region; it reads NHIYAYDAKIEIQTLTGL. Residue Cys146 is part of the active site. A propeptide spanning residues 163-176 is cleaved from the precursor; sequence HQTDKLDDNVTQVD. Ser240 carries the post-translational modification Phosphoserine. S-palmitoyl cysteine attachment occurs at residues Cys247 and Cys260.

The protein belongs to the peptidase C14A family. Heterotetramer that consists of two anti-parallel arranged heterodimers, each one formed by a 18 kDa (p18) and a 11 kDa (p11) subunits. Interacts with BIRC6/bruce. Interacts with RIPK3. In terms of assembly, heterotetramer that consists of two anti-parallel arranged heterodimers, each one formed by a 18 kDa (Caspase-6 subunit p18) and a 11 kDa (Caspase-6 subunit p11) subunit. Phosphorylated by NUAK1; phosphorylation inhibits self-activation. Phosphorylation at Ser-240 by AMP-activated protein kinase (PRKAA1 or PRKAA2) inhibits autocleavage, preventing caspase activation, thereby preventing hepatocyte apoptosis. In terms of processing, palmitoylation by ZDHHC17 blocks dimerization and subsequent activation, leading to inhibit the cysteine protease activity. Post-translationally, can be cleaved and activated by different caspases, depending on the context. Cleaved and activated by caspase-8 (CASP8) and subsequently by caspase-3 (CASP3). Can also undergo autoactivation by mediating autocleavage at Asp-162 and Asp-176, while it is not able to cleave its N-terminal disordered prodomain. Cleaved and activated by CASP1, possibly in the context of inflammation.

The protein resides in the cytoplasm. The protein localises to the nucleus. It catalyses the reaction Strict requirement for Asp at position P1 and has a preferred cleavage sequence of Val-Glu-His-Asp-|-.. During activation, the N-terminal disordered prodomain is removed by cleavage. Concomitantly, double cleavage gives rise to a large 18-kDa and a small 11-kDa subunit. The two large and two small subunits then assemble to form the active CASP6 complex. Can be cleaved and activated by different caspases, depending on the context. Cleaved and activated by caspase-8 (CASP8) and subsequently by caspase-3 (CASP3). Can also undergo autoactivation by mediating autocleavage at Asp-162 and Asp-176, while it is not able to cleave its N-terminal disordered prodomain. Intramolecular cleavage at Asp-176 is a prerequisite for CASP6 self-activation. Cleaved and activated by CASP1 in neurons, possibly in the context of inflammation. Phosphorylation at Ser-240 inhibits autocleavage, preventing caspase activation. Functionally, cysteine protease that plays essential roles in programmed cell death, axonal degeneration, development and innate immunity. Acts as a non-canonical executioner caspase during apoptosis: localizes in the nucleus and cleaves the nuclear structural protein NUMA1 and lamin A/LMNA thereby inducing nuclear shrinkage and fragmentation. Lamin-A/LMNA cleavage is required for chromatin condensation and nuclear disassembly during apoptotic execution. Acts as a regulator of liver damage by promoting hepatocyte apoptosis: in absence of phosphorylation by AMP-activated protein kinase (AMPK), catalyzes cleavage of BID, leading to cytochrome c release, thereby participating in nonalcoholic steatohepatitis. Cleaves PARK7/DJ-1 in cells undergoing apoptosis. Involved in intrinsic apoptosis by mediating cleavage of RIPK1. Furthermore, cleaves many transcription factors such as NF-kappa-B and cAMP response element-binding protein/CREBBP. Cleaves phospholipid scramblase proteins XKR4 and XKR9. In addition to apoptosis, involved in different forms of programmed cell death. Plays an essential role in defense against viruses by acting as a central mediator of the ZBP1-mediated pyroptosis, apoptosis, and necroptosis (PANoptosis), independently of its cysteine protease activity. PANoptosis is a unique inflammatory programmed cell death, which provides a molecular scaffold that allows the interactions and activation of machinery required for inflammasome/pyroptosis, apoptosis and necroptosis. Mechanistically, interacts with RIPK3 and enhances the interaction between RIPK3 and ZBP1, leading to ZBP1-mediated inflammasome activation and cell death. Plays an essential role in axon degeneration during axon pruning which is the remodeling of axons during neurogenesis but not apoptosis. Regulates B-cell programs both during early development and after antigen stimulation. In Rattus norvegicus (Rat), this protein is Caspase-6.